We begin with the raw amino-acid sequence, 301 residues long: tRNA pseudouridine synthase B (301 aa).

Asp-47 acts as the Nucleophile in catalysis.

Belongs to the pseudouridine synthase TruB family. Type 1 subfamily.

The enzyme catalyses uridine(55) in tRNA = pseudouridine(55) in tRNA. Responsible for synthesis of pseudouridine from uracil-55 in the psi GC loop of transfer RNAs. This chain is tRNA pseudouridine synthase B, found in Cereibacter sphaeroides (strain ATCC 17023 / DSM 158 / JCM 6121 / CCUG 31486 / LMG 2827 / NBRC 12203 / NCIMB 8253 / ATH 2.4.1.) (Rhodobacter sphaeroides).